A 184-amino-acid polypeptide reads, in one-letter code: Large ribosomal subunit protein uL15 (184 aa).

The tract at residues 1–55 (MDLSSLSPAKGSVKNKKRVGRGQGSGNGTTAGKGNKGQQSRSGYKRPVSEGGQMP) is disordered. Gly residues predominate over residues 21 to 35 (RGQGSGNGTTAGKGN).

This sequence belongs to the universal ribosomal protein uL15 family. Part of the 50S ribosomal subunit.

In terms of biological role, binds to the 23S rRNA. This Prosthecochloris aestuarii (strain DSM 271 / SK 413) protein is Large ribosomal subunit protein uL15.